Reading from the N-terminus, the 143-residue chain is Transcription antitermination protein NusB (143 aa).

Belongs to the NusB family.

In terms of biological role, involved in transcription antitermination. Required for transcription of ribosomal RNA (rRNA) genes. Binds specifically to the boxA antiterminator sequence of the ribosomal RNA (rrn) operons. This is Transcription antitermination protein NusB from Mannheimia succiniciproducens (strain KCTC 0769BP / MBEL55E).